The primary structure comprises 490 residues: Sec sixty-one protein homolog (490 aa).

Topologically, residues 1 to 32 (MSGFRLIDIVKPILPILPEVELPFEKLPFDDK) are cytoplasmic. A helical membrane pass occupies residues 33–53 (IVYTIFAGLIYLFAQFPLVGL). Residues 54 to 121 (PKATTPNVND…DRELFQSLTK (68 aa)) are Lumenal-facing. Residues 122–142 (VFAIVQYVILTNIFIFAGYFG) traverse the membrane as a helical segment. Residues 143–146 (DDLS) lie on the Cytoplasmic side of the membrane. The chain crosses the membrane as a helical span at residues 147 to 167 (VVQIGLINFQLVGAGIFTTLL). Residues 168–174 (AEVIDKG) are Lumenal-facing. Residues 175-195 (FGFSSGAMIINTVVIATNLVA) traverse the membrane as a helical segment. At 196–242 (DTFGVSQIKVGEDDQTEAQGALINLIQGLRSKHKTFIGGIISAFNRD) the chain is on the cytoplasmic side. Residues 243-263 (YLPNLTTTIIVLAIAIIVCYL) traverse the membrane as a helical segment. Topologically, residues 264–293 (QSVRVELPIRSTRARGTNNVYPIKLLYTGC) are lumenal. The helical transmembrane segment at 294 to 314 (LSVLFSYTILFYIHIFAFVLI) threads the bilayer. Residues 315-339 (QLVAKNEPTHIICKIMGHYENANNL) are Cytoplasmic-facing. The chain crosses the membrane as a helical span at residues 340–360 (LAVPTFPLSLLAPPTSFFKGV). Residue T361 is a topological domain, lumenal. A helical membrane pass occupies residues 362–382 (QQPLTFITYSAFILVTGIWFA). The Cytoplasmic portion of the chain corresponds to 383-421 (DKWQAISGSSARDVALEFKDQGITLMGRREQNVAKELNK). A helical transmembrane segment spans residues 422–442 (VIPIAAVTGASVLSLITVIGE). Over 443 to 449 (SLGLKGK) the chain is Lumenal. A helical transmembrane segment spans residues 450-470 (AAGIVVGIAGGFSLLEVITIE). Topologically, residues 471 to 490 (YQQSGGQSALNQVLGVPGAM) are cytoplasmic.

Belongs to the SecY/SEC61-alpha family. Component of the heterotrimeric Ssh1 complex, which is composed of SSH1, SBH2 and SSS1.

The protein localises to the endoplasmic reticulum membrane. Part of the Ssh1 complex, which probably is the major component of a channel-forming translocon complex that may function exclusively in the cotranslational pathway of protein endoplasmic reticulum (ER) import. This chain is Sec sixty-one protein homolog (SSH1), found in Saccharomyces cerevisiae (strain ATCC 204508 / S288c) (Baker's yeast).